The chain runs to 511 residues: MAASWCIEKRGSIRNDSFRDNDNIPETGCLSIIVLGASGDLAKKKTFPALFNLYRQGFLQSNEVHIFGYARTKISDDDLRSRIRGYLSQGKENEGEVSEFLQLIKYVSGSYDSAEGFTSLDKAISEHEFSKNSTEGSSRRLFYFALPPSVYPSVCRMIKSYCMNKSDLGGWTRTVVEKPFGKDLASSEQLSSQIGELFDEPQIYRIDHYLGKELVQNLLVLRFANRFFLPLWNRDNIDNIQIVFREDFGTEGRGGYFDEYGIIRDIIQNHLLQVLCLVAMEKPVSQKPEHIRDEKVKVLQSMLPIEDEEVVLGQYEGYKDDPTVPNNSNTPTFATMVLRIHNERWEGVPFIMKAGKALNSRKAEIRVQFKDVPGDIFRCQKQGRNEFVIRLQPSEAMYMKLTVKKPGLEMSTVQSELDLSYGQRYQGVVIPEAYERLILDTIRGDQQHFVRRDELKAAWEIFTPLLHRIDNGEVKPIPYKPGSRGPAEADELLQNAGYVQTHGYIWIPPTL.

Residues 36–43 (GASGDLAK), Arg71, Tyr151, and Lys178 contribute to the NADP(+) site. D-glucose 6-phosphate contacts are provided by residues Lys178, 208-212 (HYLGK), Glu246, and Asp265. The Proton acceptor role is filled by His270. Lys353 is an NADP(+) binding site. Residues Lys356 and Arg361 each coordinate D-glucose 6-phosphate. 3 residues coordinate NADP(+): Lys362, Arg366, and Arg390. Gln392 serves as a coordination point for D-glucose 6-phosphate. NADP(+) is bound by residues 398–400 (YMK), 418–420 (DLS), Arg484, and Trp506.

Belongs to the glucose-6-phosphate dehydrogenase family. Homotetramer. As to expression, found in tubers, stolons, roots, and flower buds.

The protein resides in the cytoplasm. It catalyses the reaction D-glucose 6-phosphate + NADP(+) = 6-phospho-D-glucono-1,5-lactone + NADPH + H(+). The protein operates within carbohydrate degradation; pentose phosphate pathway; D-ribulose 5-phosphate from D-glucose 6-phosphate (oxidative stage): step 1/3. With respect to regulation, regulated by metabolites. In terms of biological role, catalyzes the rate-limiting step of the oxidative pentose-phosphate pathway, which represents a route for the dissimilation of carbohydrates besides glycolysis. The main function of this enzyme is to generate NADPH for reductive biosyntheses. This chain is Glucose-6-phosphate 1-dehydrogenase, cytoplasmic isoform (G6PDH), found in Solanum tuberosum (Potato).